Consider the following 405-residue polypeptide: Argininosuccinate synthase (405 aa).

Residues 10-18 and Ala37 each bind ATP; that span reads AFSGGLDTS. Tyr90 and Ser95 together coordinate L-citrulline. Position 120 (Gly120) interacts with ATP. Residues Thr122, Asn126, and Asp127 each contribute to the L-aspartate site. Position 126 (Asn126) interacts with L-citrulline. Residues Arg130, Ser181, Ser190, Glu266, and Tyr278 each coordinate L-citrulline.

The protein belongs to the argininosuccinate synthase family. Type 1 subfamily. In terms of assembly, homotetramer.

Its subcellular location is the cytoplasm. It carries out the reaction L-citrulline + L-aspartate + ATP = 2-(N(omega)-L-arginino)succinate + AMP + diphosphate + H(+). It participates in amino-acid biosynthesis; L-arginine biosynthesis; L-arginine from L-ornithine and carbamoyl phosphate: step 2/3. The chain is Argininosuccinate synthase from Rhizorhabdus wittichii (strain DSM 6014 / CCUG 31198 / JCM 15750 / NBRC 105917 / EY 4224 / RW1) (Sphingomonas wittichii).